The primary structure comprises 95 residues: ESAT-6-like protein EsxC (95 aa).

This sequence belongs to the WXG100 family. ESAT-6 subfamily.

Its subcellular location is the secreted. In Mycolicibacterium paratuberculosis (strain ATCC BAA-968 / K-10) (Mycobacterium paratuberculosis), this protein is ESAT-6-like protein EsxC.